We begin with the raw amino-acid sequence, 142 residues long: Peptide methionine sulfoxide reductase MsrB (142 aa).

Residues 3 to 126 form the MsrB domain; that stretch reads KEKLKKKLSL…NSAALRFVPF (124 aa). C115 acts as the Nucleophile in catalysis.

It belongs to the MsrB Met sulfoxide reductase family.

The enzyme catalyses L-methionyl-[protein] + [thioredoxin]-disulfide + H2O = L-methionyl-(R)-S-oxide-[protein] + [thioredoxin]-dithiol. The chain is Peptide methionine sulfoxide reductase MsrB from Lactococcus lactis subsp. lactis (strain IL1403) (Streptococcus lactis).